The chain runs to 769 residues: Serine protease HtrA-like (769 aa).

Positions 1-20 (MDIGKKHVIPKSQYRRKRRE) are enriched in basic residues. 2 disordered regions span residues 1–287 (MDIG…DKDN) and 324–390 (EDKH…KGRA). Composition is skewed to basic and acidic residues over residues 21-64 (FFHN…ERFK) and 71-108 (LEQR…DVSK). Polar residues predominate over residues 126–137 (YEQNSEATLSTK). A compositionally biased stretch (basic and acidic residues) spans 138–186 (STDKVESTEMRKLSSDKNKVGHEEQHVLSKPSEHDKETRIDSESSRTDS). Residues 247–262 (QQSQNEQTKTYTYGDS) show a composition bias toward polar residues. Residues 264–287 (QNDKSNHENDLSHHTPSISDDKDN) show a composition bias toward basic and acidic residues. A compositionally biased stretch (polar residues) spans 331-347 (ADSSETVGYQSQSTASH). The segment covering 348–364 (RSTEKRNISINDHDKLN) has biased composition (basic and acidic residues). Residues 365-390 (GQKTNTKTSANNNQKKATSKLNKGRA) are compositionally biased toward polar residues. The chain crosses the membrane as a helical span at residues 410 to 430 (LVILMGIIILIVILNAIFNNV). Active-site charge relay system residues include His-504, Asp-534, and Ser-619. In terms of domain architecture, PDZ spans 680–733 (IASLNSFERQAVKLPGKVKNGVVVDQVDNNGLADQSGLKKGDVITELDGKLLED).

It belongs to the peptidase S1C family.

Its subcellular location is the cell membrane. The sequence is that of Serine protease HtrA-like from Staphylococcus aureus (strain N315).